The primary structure comprises 172 residues: Thioredoxin M5, chloroplastic (172 aa).

The transit peptide at Met-1–Gln-59 directs the protein to the chloroplast. The tract at residues Gln-17 to Pro-47 is disordered. Positions Cys-60 to Ser-171 constitute a Thioredoxin domain. Residues Cys-95 and Cys-98 each act as nucleophile in the active site. Residues Cys-95 and Cys-98 are joined by a disulfide bond.

It belongs to the thioredoxin family. Plant M-type subfamily. As to expression, expressed in leaves and at lower levels in flowers.

The protein localises to the plastid. It localises to the chloroplast. Thiol-disulfide oxidoreductase probably involved in the redox regulation of chloroplastic enzymes. Required for chloroplast biogenesis and differentiation. Functions as an electron donor for plastidial 2-Cys peroxiredoxins and participates in hydrogen peroxide scavenging system in chloroplasts. Possesses reducing activity towards insulin disulfide bonds. The protein is Thioredoxin M5, chloroplastic (TRXM) of Oryza sativa subsp. japonica (Rice).